The primary structure comprises 431 residues: PHD finger-containing protein 1 (431 aa).

A PHD-type zinc finger spans residues glycine 7 to serine 59. Residues cysteine 10, cysteine 13, cysteine 25, cysteine 28, histidine 34, cysteine 37, cysteine 53, and cysteine 56 each coordinate Zn(2+). The disordered stretch occupies residues glutamate 125 to histidine 221. Polar residues predominate over residues aspartate 128–threonine 139. Residues lysine 160–isoleucine 171 are compositionally biased toward basic residues. The span at valine 191–proline 202 shows a compositional bias: low complexity. Positions glutamate 205–histidine 221 are enriched in basic and acidic residues.

Interacts directly with AIPP3/BDT1.

Together with AIPP3/BDT1, cooperates to form a BAH-PHD bivalent histone reader complex able to read histone H3 lysine 27 trimethylation (H3K27me3) histone marks in order to regulate transcription, especially to prevent early flowering; promotes AIPP3/BDT1 binding to H3K27me3. This is PHD finger-containing protein 1 from Arabidopsis thaliana (Mouse-ear cress).